The sequence spans 591 residues: NADH-quinone oxidoreductase subunit C/D (591 aa).

Residues methionine 1–glutamine 182 are NADH dehydrogenase I subunit C. An NADH dehydrogenase I subunit D region spans residues aspartate 206–arginine 591.

It in the N-terminal section; belongs to the complex I 30 kDa subunit family. The protein in the C-terminal section; belongs to the complex I 49 kDa subunit family. In terms of assembly, NDH-1 is composed of 13 different subunits. Subunits NuoB, CD, E, F, and G constitute the peripheral sector of the complex.

The protein resides in the cell inner membrane. The enzyme catalyses a quinone + NADH + 5 H(+)(in) = a quinol + NAD(+) + 4 H(+)(out). Its function is as follows. NDH-1 shuttles electrons from NADH, via FMN and iron-sulfur (Fe-S) centers, to quinones in the respiratory chain. The immediate electron acceptor for the enzyme in this species is believed to be ubiquinone. Couples the redox reaction to proton translocation (for every two electrons transferred, four hydrogen ions are translocated across the cytoplasmic membrane), and thus conserves the redox energy in a proton gradient. The sequence is that of NADH-quinone oxidoreductase subunit C/D from Psychrobacter cryohalolentis (strain ATCC BAA-1226 / DSM 17306 / VKM B-2378 / K5).